The following is a 212-amino-acid chain: TATA-box-binding protein 2 (212 aa).

Tandem repeats lie at residues 30–114 (THPE…KKIG) and 120–201 (SNFN…YPIL).

The protein belongs to the TBP family. In terms of assembly, belongs to the TFIID complex together with the TBP-associated factors (TAFs). Binds DNA as monomer.

The protein resides in the nucleus. Its function is as follows. General transcription factor that functions at the core of the DNA-binding multiprotein factor TFIID. Binding of TFIID to the TATA box is the initial transcriptional step of the pre-initiation complex (PIC), playing a role in the activation of eukaryotic genes transcribed by RNA polymerase II. The polypeptide is TATA-box-binding protein 2 (Entamoeba histolytica (strain ATCC 30459 / HM-1:IMSS / ABRM)).